A 28-amino-acid polypeptide reads, in one-letter code: VGCEECPMHCKGKNAKPTCDNGVCNCNV.

Intrachain disulfides connect cysteine 3–cysteine 19, cysteine 6–cysteine 24, and cysteine 10–cysteine 26.

It belongs to the short scorpion toxin superfamily. Potassium channel inhibitor family. Alpha-KTx 09 subfamily. In terms of tissue distribution, expressed by the venom gland.

The protein localises to the secreted. Inhibits voltage-gated potassium channels. The protein is Potassium channel toxin alpha-KTx 9.3 of Aegaeobuthus nigrocinctus (Scorpion).